Consider the following 135-residue polypeptide: Universal stress protein Aq_178 (135 aa).

It belongs to the universal stress protein A family.

The polypeptide is Universal stress protein Aq_178 (Aquifex aeolicus (strain VF5)).